The primary structure comprises 333 residues: Na(+)-translocating ferredoxin:NAD(+) oxidoreductase complex subunit B (333 aa).

Residues 1–27 form a hydrophobic region; it reads MLNAILVPVGILGVFGLIFGIGLAIAA. Residues 33–92 enclose the 4Fe-4S domain; that stretch reads YEDPRVPLVRAALPGANCGGCGLPGCDALAANIVGGSAAIDACPVGGASCAAAVAEIMGM. Residues Cys50, Cys53, Cys58, Cys75, Cys138, Cys142, Cys148, Cys152, Cys172, Cys175, Cys178, Cys182, Cys217, Cys220, Cys223, Cys227, Cys246, Cys249, Cys252, Cys256, Cys279, Cys282, Cys285, Cys289, Cys310, Cys313, Cys316, and Cys320 each coordinate [4Fe-4S] cluster. 4Fe-4S ferredoxin-type domains follow at residues 126–162, 163–192, 207–237, 239–266, 270–299, and 301–330; these read REAM…IGED, GLPK…LVPE, KIAR…VENN, AKID…GDVE, STAY…GEIK, and PPYV…MRPN.

The protein belongs to the 4Fe4S bacterial-type ferredoxin family. RnfB subfamily. As to quaternary structure, the complex is composed of six subunits: RnfA, RnfB, RnfC, RnfD, RnfE and RnfG. [4Fe-4S] cluster is required as a cofactor.

The protein localises to the cell membrane. The enzyme catalyses 2 reduced [2Fe-2S]-[ferredoxin] + Na(+)(in) + NAD(+) + H(+) = 2 oxidized [2Fe-2S]-[ferredoxin] + Na(+)(out) + NADH. Its function is as follows. Part of a membrane-bound complex that couples electron transfer with translocation of ions across the membrane. Couples electron transfer from reduced ferredoxin to NAD(+) with electrogenic movement of Na(+) out of the cell. Involved in caffeate respiration. The sequence is that of Na(+)-translocating ferredoxin:NAD(+) oxidoreductase complex subunit B from Acetobacterium woodii (strain ATCC 29683 / DSM 1030 / JCM 2381 / KCTC 1655 / WB1).